A 201-amino-acid chain; its full sequence is MARSSGPLCLLLLGGLVAGILSGASADGNGLPSKKLKMQYTAGPLLKFQICVSUGYRRVFEDYMRVISQRYPDIRIEGENYLPHPIYRNIASFLSVFKLVLIGLIIAGKDPFAFFGMQAPSVWQWGQENKVYACMMVFFVSNMIENQCMSTGAFEITLNDVPVWSKLESGHLPSVQQLVQIIDNEMKLNVHMDAIPHHHRS.

Positions 1–26 (MARSSGPLCLLLLGGLVAGILSGASA) are cleaved as a signal peptide. The cysteinyl-selenocysteine (Cys-Sec) cross-link spans 51–54 (CVSU). Residue U54 is a non-standard amino acid, selenocysteine. Residues 96 to 116 (VFKLVLIGLIIAGKDPFAFFG) traverse the membrane as a helical segment.

This sequence belongs to the SelWTH family. Selenoprotein T subfamily. In terms of processing, may contain a selenide-sulfide bond between Cys-51 and Sec-54. This bond is speculated to serve as redox-active pair.

It is found in the endoplasmic reticulum membrane. It catalyses the reaction [thioredoxin]-dithiol + NADP(+) = [thioredoxin]-disulfide + NADPH + H(+). Functionally, selenoprotein with thioredoxin reductase-like oxidoreductase activity. The protein is Thioredoxin reductase-like selenoprotein T (selenot) of Xenopus tropicalis (Western clawed frog).